The primary structure comprises 493 residues: Cysteine--tRNA ligase (493 aa).

Cys-31 contacts Zn(2+). A 'HIGH' region motif is present at residues 33–43; it reads PTVYGDAHLGH. Zn(2+)-binding residues include Cys-226, His-251, and Glu-255. The short motif at 283-287 is the 'KMSKS' region element; the sequence is KMGKS. Lys-286 serves as a coordination point for ATP.

The protein belongs to the class-I aminoacyl-tRNA synthetase family. Monomer. Zn(2+) serves as cofactor.

The protein localises to the cytoplasm. The catalysed reaction is tRNA(Cys) + L-cysteine + ATP = L-cysteinyl-tRNA(Cys) + AMP + diphosphate. The protein is Cysteine--tRNA ligase of Phocaeicola vulgatus (strain ATCC 8482 / DSM 1447 / JCM 5826 / CCUG 4940 / NBRC 14291 / NCTC 11154) (Bacteroides vulgatus).